The following is a 137-amino-acid chain: Large ribosomal subunit protein uL16c (137 aa).

This sequence belongs to the universal ribosomal protein uL16 family. In terms of assembly, part of the 50S ribosomal subunit.

It is found in the plastid. The protein is Large ribosomal subunit protein uL16c of Aneura mirabilis (Parasitic liverwort).